The sequence spans 1937 residues: Myosin-8 (1937 aa).

The region spanning 35–84 (DAKTSVFVAEPKESYVKSVIQSKDGGKVTVKTESGATLTVKEDQVFPMNP) is the Myosin N-terminal SH3-like domain. A phosphothreonine mark is found at T66 and T71. Residues 88–781 (DKIEDMAMMT…LLGLLEEMRD (694 aa)) enclose the Myosin motor domain. Position 132 is an N6,N6,N6-trimethyllysine (K132). 181–188 (GESGAGKT) serves as a coordination point for ATP. Residue Y389 is modified to Phosphotyrosine. A Phosphothreonine modification is found at T419. Residue Y424 is modified to Phosphotyrosine. S625 bears the Phosphoserine mark. An actin-binding region spans residues 658–680 (LNKLMTNLRSTHPHFVRCIIPNE). H756 is subject to Pros-methylhistidine. The actin-binding stretch occupies residues 760–774 (KFGHTKVFFKAGLLG). In terms of domain architecture, IQ spans 781–813 (DEKLAQIITRTQAVCRGYLMRVEYQKMLLRRES). A coiled-coil region spans residues 842–1937 (LLKSAETEKE…REVHTKISAE (1096 aa)). Residues S1091 and S1095 each carry the phosphoserine modification. A disordered region spans residues 1125-1171 (IEAERASRAKAEKQRSDLSRELEEISERLEEAGGATSAQVEMNKKRE). Positions 1127 to 1155 (AERASRAKAEKQRSDLSRELEEISERLEE) are enriched in basic and acidic residues. Phosphoserine occurs at positions 1161 and 1236. Phosphothreonine is present on T1254. S1260 carries the post-translational modification Phosphoserine. T1285 is modified (phosphothreonine). 3 positions are modified to phosphoserine: S1291, S1302, and S1305. Residue Y1463 is modified to Phosphotyrosine. A Phosphothreonine modification is found at T1466. Residue Y1491 is modified to Phosphotyrosine. S1494 carries the phosphoserine modification. T1500 carries the phosphothreonine modification. At S1513 the chain carries Phosphoserine. The residue at position 1516 (T1516) is a Phosphothreonine. S1553, S1573, S1602, S1713, and S1725 each carry phosphoserine. T1729 is modified (phosphothreonine). Position 1738 is a phosphoserine (S1738).

Belongs to the TRAFAC class myosin-kinesin ATPase superfamily. Myosin family. In terms of assembly, muscle myosin is a hexameric protein that consists of 2 heavy chain subunits (MHC), 2 alkali light chain subunits (MLC) and 2 regulatory light chain subunits (MLC-2).

The protein localises to the cytoplasm. It localises to the myofibril. In terms of biological role, muscle contraction. The polypeptide is Myosin-8 (Myh8) (Mus musculus (Mouse)).